A 345-amino-acid polypeptide reads, in one-letter code: Ephrin-B1 (345 aa).

An N-terminal signal peptide occupies residues 1 to 24 (MARPGQRWLSKWLVAMVVLTLCRL). At 25–236 (ATPLAKNLEP…GDSDSFFNSK (212 aa)) the chain is on the extracellular side. The Ephrin RBD domain occupies 30–164 (KNLEPVSWSS…TRTMKIVMKV (135 aa)). 2 disulfides stabilise this stretch: cysteine 64-cysteine 101 and cysteine 89-cysteine 153. An N-linked (GlcNAc...) asparagine glycan is attached at asparagine 139. Residues 169-227 (NAVTPEQLTTSRPSKESDNTVKTATQAPGRGSQGDSDGKHETVNQEEKSGPGAGGGGSG) are disordered. Over residues 204 to 217 (SDGKHETVNQEEKS) the composition is skewed to basic and acidic residues. A helical transmembrane segment spans residues 237–257 (VALFAAVGAGCVIFLLIIIFL). Topologically, residues 258–345 (TVLLLKLRKR…QSPANIYYKV (88 aa)) are cytoplasmic. The Nuclear localization signal signature appears at 259–272 (VLLLKLRKRHRKHT). Residues 262 to 293 (LKLRKRHRKHTQQRAAALSLSTLASPKGGSGT) are interaction with ZHX2. Phosphoserine is present on residues serine 280 and serine 286. A PDZ-binding motif is present at residues 343-345 (YKV).

It belongs to the ephrin family. Interacts (via PDZ-binding motif) with GRIP1 and GRIP2 (via PDZ domain 6). Interacts with TLE1. The intracellular domain peptide interacts with ZHX2; the interaction enhances ZHX2 transcriptional repression activity. Inducible phosphorylation of tyrosine residues in the cytoplasmic domain. In terms of processing, proteolytically processed. The ectodomain is cleaved, probably by a metalloprotease, to produce a membrane-tethered C-terminal fragment. This fragment is then further processed by the gamma-secretase complex to yield a soluble intracellular domain peptide which can translocate to the nucleus. The intracellular domain peptide is highly labile suggesting that it is targeted for degradation by the proteasome. In terms of tissue distribution, expressed on lateral floor plate cells, specifically on commissural axon segments that have passed through the floor plate. Expressed in cells of the retinal ganglion cell layer during retinal axon guidance to the optic disk. Expressed in myogenic progenitor cells.

It localises to the cell membrane. The protein localises to the membrane raft. The protein resides in the nucleus. Its function is as follows. Cell surface transmembrane ligand for Eph receptors, a family of receptor tyrosine kinases which are crucial for migration, repulsion and adhesion during neuronal, vascular and epithelial development. Binding to Eph receptors residing on adjacent cells leads to contact-dependent bidirectional signaling into neighboring cells. Shows high affinity for the receptor tyrosine kinase EPHB1/ELK. Can also bind EPHB2 and EPHB3. Binds to, and induces the collapse of, commissural axons/growth cones in vitro. May play a role in constraining the orientation of longitudinally projecting axons. This chain is Ephrin-B1 (Efnb1), found in Mus musculus (Mouse).